Here is a 944-residue protein sequence, read N- to C-terminus: UvrABC system protein A (944 aa).

Residue 33–40 (GLSGSGKS) coordinates ATP. A C4-type zinc finger spans residues 252 to 279 (CPICGFSIGELEPRMFSFNSPFGACPTC). ABC transporter domains are found at residues 309-587 (WEPT…KKSL) and 607-935 (ITDR…QYLK). Residue 639 to 646 (GVSGSGKS) participates in ATP binding. The C4-type zinc finger occupies 738 to 764 (CEACKGDGIIKIEMHFLPDVYVPCEVC).

It belongs to the ABC transporter superfamily. UvrA family. Forms a heterotetramer with UvrB during the search for lesions.

The protein resides in the cytoplasm. In terms of biological role, the UvrABC repair system catalyzes the recognition and processing of DNA lesions. UvrA is an ATPase and a DNA-binding protein. A damage recognition complex composed of 2 UvrA and 2 UvrB subunits scans DNA for abnormalities. When the presence of a lesion has been verified by UvrB, the UvrA molecules dissociate. The polypeptide is UvrABC system protein A (Staphylococcus epidermidis (strain ATCC 35984 / DSM 28319 / BCRC 17069 / CCUG 31568 / BM 3577 / RP62A)).